Consider the following 197-residue polypeptide: Negative modulator of initiation of replication (197 aa).

This sequence belongs to the SeqA family. In terms of assembly, homodimer. Polymerizes to form helical filaments.

It localises to the cytoplasm. Functionally, negative regulator of replication initiation, which contributes to regulation of DNA replication and ensures that replication initiation occurs exactly once per chromosome per cell cycle. Binds to pairs of hemimethylated GATC sequences in the oriC region, thus preventing assembly of replication proteins and re-initiation at newly replicated origins. Repression is relieved when the region becomes fully methylated. The chain is Negative modulator of initiation of replication from Pseudoalteromonas translucida (strain TAC 125).